Consider the following 240-residue polypeptide: Probable septum site-determining protein MinC (240 aa).

It belongs to the MinC family. In terms of assembly, interacts with MinD and FtsZ.

Cell division inhibitor that blocks the formation of polar Z ring septums. Rapidly oscillates between the poles of the cell to destabilize FtsZ filaments that have formed before they mature into polar Z rings. Prevents FtsZ polymerization. This is Probable septum site-determining protein MinC from Chromobacterium violaceum (strain ATCC 12472 / DSM 30191 / JCM 1249 / CCUG 213 / NBRC 12614 / NCIMB 9131 / NCTC 9757 / MK).